Consider the following 76-residue polypeptide: MKLLLLLLTVTLLLAQVTPVMKCWGKSGRCRTTCKESEVYYILCKTEAKCCVDPKYVPVKPKLTDRNTSLESTSAV.

Residues 1–15 form the signal peptide; the sequence is MKLLLLLLTVTLLLA. 3 cysteine pairs are disulfide-bonded: Cys-23/Cys-50, Cys-30/Cys-44, and Cys-34/Cys-51.

The protein belongs to the beta-defensin family.

It is found in the secreted. Has antibacterial activity. The sequence is that of Beta-defensin 121 (DEFB121) from Pan troglodytes (Chimpanzee).